Reading from the N-terminus, the 152-residue chain is Large ribosomal subunit protein bL9 (152 aa).

The protein belongs to the bacterial ribosomal protein bL9 family.

Binds to the 23S rRNA. This chain is Large ribosomal subunit protein bL9, found in Corynebacterium urealyticum (strain ATCC 43042 / DSM 7109).